Here is a 151-residue protein sequence, read N- to C-terminus: 3-hydroxyacyl-[acyl-carrier-protein] dehydratase FabZ (151 aa).

The active site involves His-56.

This sequence belongs to the thioester dehydratase family. FabZ subfamily.

The protein localises to the cytoplasm. The enzyme catalyses a (3R)-hydroxyacyl-[ACP] = a (2E)-enoyl-[ACP] + H2O. Involved in unsaturated fatty acids biosynthesis. Catalyzes the dehydration of short chain beta-hydroxyacyl-ACPs and long chain saturated and unsaturated beta-hydroxyacyl-ACPs. This chain is 3-hydroxyacyl-[acyl-carrier-protein] dehydratase FabZ, found in Nitrobacter hamburgensis (strain DSM 10229 / NCIMB 13809 / X14).